A 195-amino-acid chain; its full sequence is Interferon tau-1 (195 aa).

The N-terminal stretch at 1 to 23 is a signal peptide; sequence MAFVLSLLMALVLVSYGPGRSLG. Cystine bridges form between C24–C122 and C52–C162. The N-linked (GlcNAc...) asparagine glycan is linked to N101.

Belongs to the alpha/beta interferon family. IFN-alphaII subfamily. In terms of tissue distribution, constitutively and exclusively expressed in the mononuclear cells of the extraembryonic trophectoderm.

The protein localises to the secreted. Paracrine hormone primarily responsible for maternal recognition of pregnancy. Interacts with endometrial receptors, probably type I interferon receptors, and blocks estrogen receptor expression, preventing the estrogen-induced increase in oxytocin receptor expression in the endometrium. This results in the suppression of the pulsatile endometrial release of the luteolytic hormone prostaglandin F2-alpha, hindering the regression of the corpus luteum (luteolysis) and therefore a return to ovarian cyclicity. This, and a possible direct effect of IFN-tau on prostaglandin synthesis, leads in turn to continued ovarian progesterone secretion, which stimulates the secretion by the endometrium of the nutrients required for the growth of the conceptus. In summary, displays particularly high antiviral and antiproliferative potency concurrently with particular weak cytotoxicity, high antiluteolytic activity and immunomodulatory properties. In contrast with other IFNs, IFN-tau is not virally inducible. This Bos taurus (Bovine) protein is Interferon tau-1 (IFNT1).